We begin with the raw amino-acid sequence, 131 residues long: MKLVVDASAIAALYVPEERSEQAERAVSQAQELHTLDLAAYEVANDLWKHARRGLLREDEASNMLEELWEFFKALKVHSYAEVLKDAFALALKHGVTVYDAAYVALAEKIGGKLLTLDRQLAEKFPALVTP.

Residues 4–121 (VVDASAIAAL…GKLLTLDRQL (118 aa)) enclose the PINc domain. Asp6, Asp100, and Asp118 together coordinate Mg(2+).

The protein belongs to the PINc/VapC protein family. In terms of assembly, homodimer. Forms a complex with putative antitoxin VapB3, possibly VapB(2)-VapC(2). Mg(2+) serves as cofactor.

Inhibited by EDTA. Functionally, toxic component of a type II toxin-antitoxin (TA) system. Has ribonuclease activity. The polypeptide is Ribonuclease VapC3 (Pyrobaculum aerophilum (strain ATCC 51768 / DSM 7523 / JCM 9630 / CIP 104966 / NBRC 100827 / IM2)).